A 50-amino-acid polypeptide reads, in one-letter code: Small, acid-soluble spore protein K (50 aa).

The interval 1–50 (MVRNKAKGFPNQNNNKFEGEPRAKDDYASKRADGSINSHPQERMRASGRR) is disordered. 2 stretches are compositionally biased toward basic and acidic residues: residues 17–33 (FEGEPRAKDDYASKRAD) and 40–50 (PQERMRASGRR).

The protein belongs to the SspK family.

It localises to the spore core. This is Small, acid-soluble spore protein K from Bacillus velezensis (strain DSM 23117 / BGSC 10A6 / LMG 26770 / FZB42) (Bacillus amyloliquefaciens subsp. plantarum).